Here is a 366-residue protein sequence, read N- to C-terminus: Histidinol-phosphate aminotransferase 2 (366 aa).

A compositionally biased stretch (polar residues) spans 1–11; that stretch reads MQVKDQLSSLQ. A disordered region spans residues 1 to 21; it reads MQVKDQLSSLQPYKPGKSPEQ. Lys222 is modified (N6-(pyridoxal phosphate)lysine).

This sequence belongs to the class-II pyridoxal-phosphate-dependent aminotransferase family. Histidinol-phosphate aminotransferase subfamily. In terms of assembly, homodimer. It depends on pyridoxal 5'-phosphate as a cofactor.

It catalyses the reaction L-histidinol phosphate + 2-oxoglutarate = 3-(imidazol-4-yl)-2-oxopropyl phosphate + L-glutamate. Its pathway is amino-acid biosynthesis; L-histidine biosynthesis; L-histidine from 5-phospho-alpha-D-ribose 1-diphosphate: step 7/9. In Bacillus anthracis, this protein is Histidinol-phosphate aminotransferase 2 (hisC2).